The sequence spans 154 residues: Lipoprotein signal peptidase (154 aa).

The next 2 membrane-spanning stretches (helical) occupy residues 52-72 and 85-105; these read ILAGQMWFFYLITTAVIIGIV and LGVALGLMLGGAIGNFIDRAV. Residues D111 and D129 contribute to the active site. A helical membrane pass occupies residues 124-144; sequence IFNIADSSLCVGVMLLFIQML.

This sequence belongs to the peptidase A8 family.

The protein localises to the cell membrane. The enzyme catalyses Release of signal peptides from bacterial membrane prolipoproteins. Hydrolyzes -Xaa-Yaa-Zaa-|-(S,diacylglyceryl)Cys-, in which Xaa is hydrophobic (preferably Leu), and Yaa (Ala or Ser) and Zaa (Gly or Ala) have small, neutral side chains.. It participates in protein modification; lipoprotein biosynthesis (signal peptide cleavage). Functionally, this protein specifically catalyzes the removal of signal peptides from prolipoproteins. The protein is Lipoprotein signal peptidase of Bacillus subtilis (strain 168).